Here is a 411-residue protein sequence, read N- to C-terminus: Gamma-glutamyl phosphate reductase (411 aa).

This sequence belongs to the gamma-glutamyl phosphate reductase family.

The protein localises to the cytoplasm. It catalyses the reaction L-glutamate 5-semialdehyde + phosphate + NADP(+) = L-glutamyl 5-phosphate + NADPH + H(+). It participates in amino-acid biosynthesis; L-proline biosynthesis; L-glutamate 5-semialdehyde from L-glutamate: step 2/2. Functionally, catalyzes the NADPH-dependent reduction of L-glutamate 5-phosphate into L-glutamate 5-semialdehyde and phosphate. The product spontaneously undergoes cyclization to form 1-pyrroline-5-carboxylate. The protein is Gamma-glutamyl phosphate reductase of Wolinella succinogenes (strain ATCC 29543 / DSM 1740 / CCUG 13145 / JCM 31913 / LMG 7466 / NCTC 11488 / FDC 602W) (Vibrio succinogenes).